The primary structure comprises 550 residues: Major fimbrium tip subunit FimE (550 aa).

Residues 1-21 form the signal peptide; the sequence is MKSKSIIAQLLYVLIAFMAVS. The N-palmitoyl cysteine moiety is linked to residue C22. Residue C22 is the site of S-diacylglycerol cysteine attachment. Positions 22-51 are excised as a propeptide; sequence CVADKSEPCPSGEPTRVSGSIVSLEHHGLR.

The protein belongs to the FimE family. Fimbriae are composed of a major, structural subunit and the minor components FimC, FimD and FimE. Identified in a complex composed of FimC, FimD and FimE (in vitro). Does not directly interact with host proteins, but only as a complex with FimC and FimD.

It is found in the fimbrium. The protein localises to the cell outer membrane. In terms of biological role, probably a component of the fimbrium tip; required for incorporation of FimC and FimD into fimbriae. These long, filamentous pili are attached to the cell surface; they mediate biofilm formation, adhesion onto host cells and onto other bacteria that are part of the oral microbiome. They play an important role in invasion of periodontal tissues and are major virulence factors. FimC, FimD and FimE contribute to interaction with host CXCR4 and thereby down-regulate the TLR2-mediated host immune response. This Porphyromonas gingivalis (strain ATCC 33277 / DSM 20709 / CIP 103683 / JCM 12257 / NCTC 11834 / 2561) protein is Major fimbrium tip subunit FimE.